Reading from the N-terminus, the 457-residue chain is Bifunctional protein GlmU (457 aa).

Residues 1-229 (MYNCAIILAA…YEEIMGVNSR (229 aa)) are pyrophosphorylase. Residues 8 to 11 (LAAG), lysine 22, glutamine 73, and 78 to 79 (GT) each bind UDP-N-acetyl-alpha-D-glucosamine. Aspartate 103 contributes to the Mg(2+) binding site. UDP-N-acetyl-alpha-D-glucosamine-binding residues include glycine 140, glutamate 155, asparagine 170, and asparagine 227. Mg(2+) is bound at residue asparagine 227. The tract at residues 230–250 (VQLSEAEIVMRKRINHKHMVN) is linker. An N-acetyltransferase region spans residues 251-457 (GVTFIDCEST…WLDKKGLLKK (207 aa)). 2 residues coordinate UDP-N-acetyl-alpha-D-glucosamine: arginine 332 and lysine 350. The active-site Proton acceptor is the histidine 362. Residues tyrosine 365 and asparagine 376 each contribute to the UDP-N-acetyl-alpha-D-glucosamine site. Acetyl-CoA is bound by residues 385 to 386 (NY), alanine 422, and arginine 439.

This sequence in the N-terminal section; belongs to the N-acetylglucosamine-1-phosphate uridyltransferase family. In the C-terminal section; belongs to the transferase hexapeptide repeat family. As to quaternary structure, homotrimer. The cofactor is Mg(2+).

The protein localises to the cytoplasm. The catalysed reaction is alpha-D-glucosamine 1-phosphate + acetyl-CoA = N-acetyl-alpha-D-glucosamine 1-phosphate + CoA + H(+). It catalyses the reaction N-acetyl-alpha-D-glucosamine 1-phosphate + UTP + H(+) = UDP-N-acetyl-alpha-D-glucosamine + diphosphate. Its pathway is nucleotide-sugar biosynthesis; UDP-N-acetyl-alpha-D-glucosamine biosynthesis; N-acetyl-alpha-D-glucosamine 1-phosphate from alpha-D-glucosamine 6-phosphate (route II): step 2/2. The protein operates within nucleotide-sugar biosynthesis; UDP-N-acetyl-alpha-D-glucosamine biosynthesis; UDP-N-acetyl-alpha-D-glucosamine from N-acetyl-alpha-D-glucosamine 1-phosphate: step 1/1. It functions in the pathway bacterial outer membrane biogenesis; LPS lipid A biosynthesis. Catalyzes the last two sequential reactions in the de novo biosynthetic pathway for UDP-N-acetylglucosamine (UDP-GlcNAc). The C-terminal domain catalyzes the transfer of acetyl group from acetyl coenzyme A to glucosamine-1-phosphate (GlcN-1-P) to produce N-acetylglucosamine-1-phosphate (GlcNAc-1-P), which is converted into UDP-GlcNAc by the transfer of uridine 5-monophosphate (from uridine 5-triphosphate), a reaction catalyzed by the N-terminal domain. The protein is Bifunctional protein GlmU of Clostridium botulinum (strain ATCC 19397 / Type A).